A 78-amino-acid chain; its full sequence is Large ribosomal subunit protein bL28 (78 aa).

It belongs to the bacterial ribosomal protein bL28 family.

The protein is Large ribosomal subunit protein bL28 of Prochlorococcus marinus (strain AS9601).